The sequence spans 573 residues: 2-succinyl-5-enolpyruvyl-6-hydroxy-3-cyclohexene-1-carboxylate synthase (573 aa).

The protein belongs to the TPP enzyme family. MenD subfamily. In terms of assembly, homodimer. Requires Mg(2+) as cofactor. It depends on Mn(2+) as a cofactor. Thiamine diphosphate serves as cofactor.

It catalyses the reaction isochorismate + 2-oxoglutarate + H(+) = 5-enolpyruvoyl-6-hydroxy-2-succinyl-cyclohex-3-ene-1-carboxylate + CO2. It participates in quinol/quinone metabolism; 1,4-dihydroxy-2-naphthoate biosynthesis; 1,4-dihydroxy-2-naphthoate from chorismate: step 2/7. It functions in the pathway quinol/quinone metabolism; menaquinone biosynthesis. Its function is as follows. Catalyzes the thiamine diphosphate-dependent decarboxylation of 2-oxoglutarate and the subsequent addition of the resulting succinic semialdehyde-thiamine pyrophosphate anion to isochorismate to yield 2-succinyl-5-enolpyruvyl-6-hydroxy-3-cyclohexene-1-carboxylate (SEPHCHC). This Shewanella sp. (strain W3-18-1) protein is 2-succinyl-5-enolpyruvyl-6-hydroxy-3-cyclohexene-1-carboxylate synthase.